The following is a 138-amino-acid chain: Large ribosomal subunit protein uL14m (138 aa).

The protein belongs to the universal ribosomal protein uL14 family. As to quaternary structure, component of the mitochondrial large ribosomal subunit (mt-LSU). Mature yeast 74S mitochondrial ribosomes consist of a small (37S) and a large (54S) subunit. The 37S small subunit contains a 15S ribosomal RNA (15S mt-rRNA) and 34 different proteins. The 54S large subunit contains a 21S rRNA (21S mt-rRNA) and 46 different proteins.

It is found in the mitochondrion. Its function is as follows. Component of the mitochondrial ribosome (mitoribosome), a dedicated translation machinery responsible for the synthesis of mitochondrial genome-encoded proteins, including at least some of the essential transmembrane subunits of the mitochondrial respiratory chain. The mitoribosomes are attached to the mitochondrial inner membrane and translation products are cotranslationally integrated into the membrane. The chain is Large ribosomal subunit protein uL14m (MRPL38) from Saccharomyces cerevisiae (strain ATCC 204508 / S288c) (Baker's yeast).